We begin with the raw amino-acid sequence, 322 residues long: Transaldolase (322 aa).

Lys-136 functions as the Schiff-base intermediate with substrate in the catalytic mechanism.

The protein belongs to the transaldolase family. Type 1 subfamily. As to quaternary structure, homodimer.

It is found in the cytoplasm. The catalysed reaction is D-sedoheptulose 7-phosphate + D-glyceraldehyde 3-phosphate = D-erythrose 4-phosphate + beta-D-fructose 6-phosphate. Its pathway is carbohydrate degradation; pentose phosphate pathway; D-glyceraldehyde 3-phosphate and beta-D-fructose 6-phosphate from D-ribose 5-phosphate and D-xylulose 5-phosphate (non-oxidative stage): step 2/3. In terms of biological role, transaldolase is important for the balance of metabolites in the pentose-phosphate pathway. The chain is Transaldolase from Xanthomonas campestris pv. campestris (strain B100).